Reading from the N-terminus, the 613-residue chain is Putative adenosylhomocysteinase 3 (613 aa).

Composition is skewed to low complexity over residues 1-14 and 35-44; these read MSVQVVSAAAAAKV and AAAVGAMVPP. The segment at 1–186 is disordered; sequence MSVQVVSAAA…KQQKNSKGSS (186 aa). Ser-2 carries the N-acetylserine modification. The interval 2-111 is LISN domain, inhibits interaction with ITPR1; it reads SVQVVSAAAA…DGGEALVSPD (110 aa). Residues 52–68 show a composition bias toward pro residues; sequence APAPAPAAERPPAPGPG. Low complexity predominate over residues 70 to 80; sequence GPTAALSPAAG. Ser-109 carries the phosphoserine modification. The segment covering 137–146 has biased composition (basic residues); it reads RPTKIGRRSL. A compositionally biased stretch (low complexity) spans 147-166; it reads SRSISQSSTDSYSSAASYTD. 4 positions are modified to phosphoserine: Ser-151, Ser-154, Ser-157, and Ser-160. Residues Thr-238, Asp-312, and Glu-337 each contribute to the substrate site. 338–340 contributes to the NAD(+) binding site; the sequence is SVT. Residues Lys-367 and Asp-371 each contribute to the substrate site. Residues Asn-372, 403 to 408, Glu-424, Asn-459, 480 to 482, and Asn-527 each bind NAD(+); these read GEVGKG and MGH.

Belongs to the adenosylhomocysteinase family. Homotetramer. Forms heteromultimers with AHCYL1 (via the C-terminal region). Interacts with ITPR1; with lower affinity than AHCYL1 and maybe via ITPR1. Interacts with SLC4A4. Interacts with ZCCHC4. Requires NAD(+) as cofactor. Post-translationally, phosphorylated during neuronal differentiation at the LISN domain. In terms of tissue distribution, highly expressed in cerebrum, cerebellum and kidney. Also expressed in thymus, spleen, testis, ovary and, at lower, levels in lung and liver (at protein level). In cerebellum, expressed in interneurons.

The protein resides in the cytoplasm. The protein localises to the microsome. It catalyses the reaction S-adenosyl-L-homocysteine + H2O = L-homocysteine + adenosine. It functions in the pathway amino-acid biosynthesis; L-homocysteine biosynthesis; L-homocysteine from S-adenosyl-L-homocysteine: step 1/1. Functionally, may regulate the electrogenic sodium/bicarbonate cotransporter SLC4A4 activity and Mg(2+)-sensitivity. On the contrary of its homolog AHCYL1, does not regulate ITPR1 sensitivity to inositol 1,4,5-trisphosphate. This chain is Putative adenosylhomocysteinase 3 (Ahcyl2), found in Mus musculus (Mouse).